The following is a 365-amino-acid chain: tRNA-specific 2-thiouridylase MnmA (365 aa).

ATP contacts are provided by residues 6–13 (AMSGGVDS) and leucine 32. The active-site Nucleophile is the cysteine 101. Cysteine 101 and cysteine 199 are joined by a disulfide. Glycine 125 serves as a coordination point for ATP. The interval 149–151 (KDQ) is interaction with tRNA. The Cysteine persulfide intermediate role is filled by cysteine 199.

It belongs to the MnmA/TRMU family.

The protein localises to the cytoplasm. The enzyme catalyses S-sulfanyl-L-cysteinyl-[protein] + uridine(34) in tRNA + AH2 + ATP = 2-thiouridine(34) in tRNA + L-cysteinyl-[protein] + A + AMP + diphosphate + H(+). Catalyzes the 2-thiolation of uridine at the wobble position (U34) of tRNA, leading to the formation of s(2)U34. This is tRNA-specific 2-thiouridylase MnmA from Corynebacterium efficiens (strain DSM 44549 / YS-314 / AJ 12310 / JCM 11189 / NBRC 100395).